The chain runs to 321 residues: Coproporphyrin III ferrochelatase (321 aa).

Fe(2+)-binding residues include H185 and E267.

Belongs to the ferrochelatase family.

It is found in the cytoplasm. It catalyses the reaction Fe-coproporphyrin III + 2 H(+) = coproporphyrin III + Fe(2+). It participates in porphyrin-containing compound metabolism; protoheme biosynthesis. Functionally, involved in coproporphyrin-dependent heme b biosynthesis. Catalyzes the insertion of ferrous iron into coproporphyrin III to form Fe-coproporphyrin III. This is Coproporphyrin III ferrochelatase from Lacticaseibacillus paracasei (strain ATCC 334 / BCRC 17002 / CCUG 31169 / CIP 107868 / KCTC 3260 / NRRL B-441) (Lactobacillus paracasei).